The following is a 287-amino-acid chain: MAIRSFRPYTPGTRTRVVTDFSEVTGRKPERSLVVSKHRRKGRNNRGVITCRHRGGGHKRQYRVVDFRRNKHGVPAKVAAIHYDPHRNARLALLFYTDGEKRYILAPAGVTVGQTVISGPDAPIEDGNAMPLSSVPLGSSVHCVELYAGRGGQMVRTAGASAQVMAKEGDYVALKLPSTEVRLVRRECYATLGEVGNSEIRNTSLGKAGRRRWLGRRPQVRGSVMNPCDHPHGGGEGRAPIGRSGPVTPWGKPALGLKTRKRNKPSNKFVLRKRRKTSKRSRGGRDS.

Residues 221-287 (RGSVMNPCDH…SKRSRGGRDS (67 aa)) are disordered. The segment covering 258-287 (KTRKRNKPSNKFVLRKRRKTSKRSRGGRDS) has biased composition (basic residues).

Belongs to the universal ribosomal protein uL2 family. As to quaternary structure, part of the 50S ribosomal subunit. Forms a bridge to the 30S subunit in the 70S ribosome.

One of the primary rRNA binding proteins. Required for association of the 30S and 50S subunits to form the 70S ribosome, for tRNA binding and peptide bond formation. It has been suggested to have peptidyltransferase activity; this is somewhat controversial. Makes several contacts with the 16S rRNA in the 70S ribosome. This is Large ribosomal subunit protein uL2 from Synechococcus sp. (strain WH7803).